A 265-amino-acid chain; its full sequence is Novel plant SNARE 12 (265 aa).

The Cytoplasmic segment spans residues 1-217 (MASELPMSPH…IGRQVATDKC (217 aa)). Residues 32–106 (LDKIKDSSRQ…ALRKTYLNTL (75 aa)) are a coiled coil. Serine 74 carries the phosphoserine modification. The t-SNARE coiled-coil homology domain occupies 146–208 (MKRMDETDQA…KKASQLVKEI (63 aa)). Residues 218 to 238 (IMAFLFLIVCGVIAIIIVKIV) traverse the membrane as a helical; Anchor for type IV membrane protein segment. At 239–265 (NPNNKDIRDIPGLAPPAQSRKLLYFRE) the chain is on the vesicular side.

This sequence belongs to the novel plant SNARE family. Expressed in roots, stems, flower, siliques and leaves.

Its subcellular location is the membrane. Functionally, vesicle trafficking protein that functions in the secretory pathway. This Arabidopsis thaliana (Mouse-ear cress) protein is Novel plant SNARE 12 (NPSN12).